The sequence spans 1090 residues: Leucine--tRNA ligase, cytoplasmic (1090 aa).

Serine 2 bears the N-acetylserine mark. Residues 66–76 carry the 'HIGH' region motif; that stretch reads PYMNGVMHAGH. Threonine 142 bears the Phosphothreonine mark. Residues 729 to 733 carry the 'KMSKS' region motif; it reads KMSKS. Lysine 732 lines the ATP pocket.

This sequence belongs to the class-I aminoacyl-tRNA synthetase family.

Its subcellular location is the cytoplasm. It carries out the reaction tRNA(Leu) + L-leucine + ATP = L-leucyl-tRNA(Leu) + AMP + diphosphate. The sequence is that of Leucine--tRNA ligase, cytoplasmic (CDC60) from Saccharomyces cerevisiae (strain ATCC 204508 / S288c) (Baker's yeast).